The primary structure comprises 623 residues: Prothrombin (623 aa).

The signal sequence occupies residues 1-24 (MAHVGGLWLHGCLALAVLVSLVHS). The propeptide occupies 25–43 (QHVFMAPQQALSLLQRARR). Residues 44-90 (ANSGFFEEMRKGNLERECVEEQCSREEAYEALESPSETDAFWAKYTA) form the Gla domain. 10 positions are modified to 4-carboxyglutamate: Glu-50, Glu-51, Glu-58, Glu-60, Glu-63, Glu-64, Glu-69, Glu-70, Glu-73, and Glu-76. The cysteines at positions 61 and 66 are disulfide-linked. 11 disulfide bridges follow: Cys-91–Cys-104, Cys-109–Cys-187, Cys-130–Cys-170, Cys-158–Cys-182, Cys-214–Cys-292, Cys-235–Cys-275, Cys-263–Cys-287, Cys-337–Cys-483, Cys-392–Cys-408, Cys-537–Cys-551, and Cys-565–Cys-595. Kringle domains lie at 108–187 (NCAE…IPVC) and 213–292 (TCVP…LDYC). 2 N-linked (GlcNAc...) asparagine glycosylation sites follow: Asn-120 and Asn-144. One can recognise a Peptidase S1 domain in the interval 365–619 (IVEGSDAEIG…LKKWMQKVID (255 aa)). Residue His-407 is the Charge relay system of the active site. N-linked (GlcNAc...) asparagine glycosylation occurs at Asn-417. The active-site Charge relay system is Asp-463. The tract at residues 552–574 (AGYKPDEGKRGDACEGDSGGPFV) is high affinity receptor-binding region which is also known as the TP508 peptide. Ser-569 acts as the Charge relay system in catalysis.

The protein belongs to the peptidase S1 family. As to quaternary structure, heterodimer (named alpha-thrombin) of a light and a heavy chain; disulfide-linked. Forms a heterodimer with SERPINA5. In plasma, interacts (via N-terminus) with alpha-1-microglobulin; this interaction does not prevent the activation of prothrombin to thrombin. The gamma-carboxyglutamyl residues, which bind calcium ions, result from the carboxylation of glutamyl residues by a microsomal enzyme, the vitamin K-dependent carboxylase. The modified residues are necessary for the calcium-dependent interaction with a negatively charged phospholipid surface, which is essential for the conversion of prothrombin to thrombin. In terms of processing, in the penultimate step of the coagulation cascade, prothrombin is converted to thrombin by the prothrombinase complex composed of factor Xa (F10), cofactor Va (F5), and phospholipids. This activation requires factor Xa-catalyzed sequential cleavage at 2 sites, Arg-315 and Arg-364, along 2 possible pathways. In the first pathway, the first cleavage occurs at Arg-315, leading to the formation of the inactive intermediate prethrombin-2. This pathway preferentially occurs on platelets and in the absence of cofactor Va. In the second pathway, the first cleavage occurs at Arg-364, which separates protease domain into 2 chains that remain connected through a disulfide bond and generates the active intermediate meizothrombin. The presence of cofactor Va directs activation along the meizothrombin pathway and greatly accelerates the rate of cleavage at Arg-364, but has a smaller effect on the cleavage of meizothrombin at Arg-315. Meizothrombin accumulates as an intermediate when prothrombinase is assembled on the membrane of red blood cells.

It carries out the reaction Selective cleavage of Arg-|-Gly bonds in fibrinogen to form fibrin and release fibrinopeptides A and B.. Activity is promoted in the presence of negatively charged surfaces, such as polyphosphate and dextran sulfate. Inhibited by SERPINA5. In terms of biological role, thrombin, which cleaves bonds after Arg and Lys, converts fibrinogen to fibrin and activates factors V, VII, VIII, XIII, and, in complex with thrombomodulin, protein C. Functions in blood homeostasis, inflammation and wound healing. Activates coagulation factor XI (F11); activation is promoted by the contact with negatively charged surfaces. Triggers the production of pro-inflammatory cytokines, such as MCP-1/CCL2 and IL8/CXCL8, in endothelial cells. This chain is Prothrombin (F2), found in Sus scrofa (Pig).